The primary structure comprises 349 residues: Mannonate dehydratase (349 aa).

This sequence belongs to the mannonate dehydratase family. Fe(2+) serves as cofactor. Requires Mn(2+) as cofactor.

It catalyses the reaction D-mannonate = 2-dehydro-3-deoxy-D-gluconate + H2O. Its pathway is carbohydrate metabolism; pentose and glucuronate interconversion. Catalyzes the dehydration of D-mannonate. The polypeptide is Mannonate dehydratase (Oceanobacillus iheyensis (strain DSM 14371 / CIP 107618 / JCM 11309 / KCTC 3954 / HTE831)).